The primary structure comprises 84 residues: ATP synthase subunit c (84 aa).

Helical transmembrane passes span I9–I29 and I54–I74.

Belongs to the ATPase C chain family. As to quaternary structure, F-type ATPases have 2 components, F(1) - the catalytic core - and F(0) - the membrane proton channel. F(1) has five subunits: alpha(3), beta(3), gamma(1), delta(1), epsilon(1). F(0) has three main subunits: a(1), b(2) and c(10-14). The alpha and beta chains form an alternating ring which encloses part of the gamma chain. F(1) is attached to F(0) by a central stalk formed by the gamma and epsilon chains, while a peripheral stalk is formed by the delta and b chains.

Its subcellular location is the cell inner membrane. F(1)F(0) ATP synthase produces ATP from ADP in the presence of a proton or sodium gradient. F-type ATPases consist of two structural domains, F(1) containing the extramembraneous catalytic core and F(0) containing the membrane proton channel, linked together by a central stalk and a peripheral stalk. During catalysis, ATP synthesis in the catalytic domain of F(1) is coupled via a rotary mechanism of the central stalk subunits to proton translocation. Its function is as follows. Key component of the F(0) channel; it plays a direct role in translocation across the membrane. A homomeric c-ring of between 10-14 subunits forms the central stalk rotor element with the F(1) delta and epsilon subunits. The chain is ATP synthase subunit c from Glaesserella parasuis serovar 5 (strain SH0165) (Haemophilus parasuis).